A 614-amino-acid polypeptide reads, in one-letter code: Vitamin B12 transporter BtuB (614 aa).

The signal sequence occupies residues 1 to 20; that stretch reads MIKKASLLTACSVTAFSAWA. The TonB box motif lies at 26–33; the sequence is DTLVVTAN. Residues 38-152 enclose the TBDR plug domain; that stretch reads PRSTVLAPTT…IGGVVNIITT (115 aa). Residues Leu-83, Ser-85, Asn-92, and 110-111 contribute to the cyanocob(III)alamin site; that span reads VS. The TBDR beta-barrel domain occupies 155–614; sequence HPGTEISAGW…EYTLSGSYTF (460 aa). 3 beta stranded membrane passes run 158 to 165, 169 to 178, and 184 to 195; these read TEISAGWG, YQNYDVSTQQ, and TRVTLLGDYAHT. Residues Asp-199, Gln-211, Asp-213, and Asp-215 each contribute to the Ca(2+) site. The next 2 beta stranded transmembrane spans lie at 217–227 and 232–248; these read FLSKTLYGALE and DVWS…NRTN. Tyr-249 and Asp-250 together coordinate Ca(2+). Ala-251 serves as a coordination point for cyanocob(III)alamin. Residue Asp-261 coordinates Ca(2+). The next 14 membrane-spanning stretches (beta stranded) occupy residues 263 to 277, 279 to 296, 309 to 325, 328 to 337, 353 to 369, 371 to 381, 385 to 400, 403 to 417, 434 to 443, 449 to 458, 473 to 490, 494 to 509, 517 to 529, and 535 to 550; these read RKLY…LRYN, ELIK…KDYN, TLDE…NNII, HGNIGAGVDW, YDQR…QQVG, FTFEGAGRSDD, FGRH…WEFI, YRFI…KAPN, KSKQWEGAFE, VNWRISGYRN, YYNE…TANF, PLTH…ARNA, RRAK…QLDW, and DWGI…YDKD. Residue Thr-309 participates in cyanocob(III)alamin binding. Residue Arg-517 coordinates cyanocob(III)alamin. Position 551 (Tyr-551) interacts with cyanocob(III)alamin. The next 3 membrane-spanning stretches (beta stranded) occupy residues 558–572, 585–596, and 602–614; these read TVKM…LAVA, IANLFDKDYETV, and AGRE…SYTF. A TonB C-terminal box motif is present at residues 597-614; the sequence is YGYQTAGREYTLSGSYTF.

Belongs to the TonB-dependent receptor family. BtuB (TC 1.B.14.3.1) subfamily.

The protein localises to the cell outer membrane. Involved in the active translocation of vitamin B12 (cyanocobalamin) across the outer membrane to the periplasmic space. It derives its energy for transport by interacting with the trans-periplasmic membrane protein TonB. This is Vitamin B12 transporter BtuB from Escherichia coli O1:K1 / APEC.